We begin with the raw amino-acid sequence, 612 residues long: MDTLTAPTTQSEQPPPPLTASLSRRYACDRCRSHKLRCNRDLMTSTNSPCQRCRKARVKCTIGASIRVGLSPEELKNGENVHRASPGRSAGSHRTASTPSNHAPRSHGRTFTPESAHQAPPYPSNRSMSGSMRLSPVPWLDMISFDGAQELNFDGSTSGLPMGSHTNGSGPLHAPMGGSTSSNTSSTFLDVRPPLHTPASSKPQQEAWRTGDDSTDLRLLSQIPRTRGGGVTDPAAGLTQQHPAGVTSSAPLVSHDHAFAPPQTSIISEPIPGDDLPAGGRPPTWFPARSRAGSTPSPTELKDACIQKLSDLSASLMKDLDLIITCKTASSFLFTPSDKTAAGYLFKTLDGSMTEDNAVARMLYGSERFLDIIKLFNQLPSLPSSSLSMPAAAAAAAAAASYGSTRPVDSDDAYYYSDLEDTGDIRSRNPTPEDRGNEQWSILQAYLGRAGQGPPMGPSQGSSSRSTTTNCSSSFVEVQKPDVPSILVILSCYTCLLKIYETVFFVIQHVLECSPANPSGTTDIPHTVRDLNINGFFLQNHRTLQIKILIQVSTYMLDSIQKSLGTILSDSMFQALLKTLMKEEGCTITSQGEETGMQGVRDLIRRVEEMLA.

Over residues 1–12 the composition is skewed to polar residues; sequence MDTLTAPTTQSE. The disordered stretch occupies residues 1–21; it reads MDTLTAPTTQSEQPPPPLTAS. The segment at residues 28-60 is a DNA-binding region (zn(2)-C6 fungal-type); that stretch reads CDRCRSHKLRCNRDLMTSTNSPCQRCRKARVKC. Over residues 73-82 the composition is skewed to basic and acidic residues; the sequence is EELKNGENVH. 3 disordered regions span residues 73–130, 154–249, and 451–470; these read EELK…SMSG, DGST…VTSS, and GQGPPMGPSQGSSSRSTTTN. Composition is skewed to polar residues over residues 92–103, 154–169, and 238–249; these read SHRTASTPSNHA, DGSTSGLPMGSHTNGS, and LTQQHPAGVTSS. The span at 458 to 470 shows a compositional bias: low complexity; the sequence is PSQGSSSRSTTTN.

It localises to the nucleus. Its function is as follows. Transcription factor that specifically regulates the expression of the gene cluster that mediates the biosynthesis of the cytotoxic leucine-containing cytochalasans, including aspochalasin C, aspochalasin E, TMC-169, flavichalasine F, aspergillin PZ, aspochalasin M and flavichalasine G. This is Transcription factor ffsR from Aspergillus flavipes.